A 110-amino-acid chain; its full sequence is Insulin-1 (110 aa).

A signal peptide spans 1–24; the sequence is MALWMRFLPLLALLVLWEPKPAQA. 3 cysteine pairs are disulfide-bonded: Cys31–Cys96, Cys43–Cys109, and Cys95–Cys100. The propeptide at 57-87 is c peptide; that stretch reads EVEDPQVPQLELGGGPEAGDLQTLALEVARQ.

It belongs to the insulin family. Heterodimer of a B chain and an A chain linked by two disulfide bonds.

The protein resides in the secreted. Functionally, insulin decreases blood glucose concentration. It increases cell permeability to monosaccharides, amino acids and fatty acids. It accelerates glycolysis, the pentose phosphate cycle, and glycogen synthesis in liver. The sequence is that of Insulin-1 (Ins1) from Rattus norvegicus (Rat).